A 129-amino-acid chain; its full sequence is Putative zinc finger protein 702 (129 aa).

3 C2H2-type zinc fingers span residues 34–56 (YKCD…HRCH), 62–84 (YKCN…KAIH), and 90–112 (HKCN…HRLH).

The protein belongs to the krueppel C2H2-type zinc-finger protein family.

Its subcellular location is the nucleus. Functionally, may be involved in transcriptional regulation. This is Putative zinc finger protein 702 (ZNF702P) from Homo sapiens (Human).